Consider the following 583-residue polypeptide: CD166 antigen (583 aa).

A signal peptide spans 1–27 (MASKAAPSCRLVFCLLISATVLRPGLG). 2 Ig-like V-type domains span residues 28–120 (WYTV…TEDD) and 125–234 (PTVV…KTVY). At 28–527 (WYTVNSAYGD…NKEKVNDQAK (500 aa)) the chain is on the extracellular side. 2 disulfides stabilise this stretch: C43-C113 and C157-C220. N91, N95, N167, N265, N306, N361, N457, N480, and N499 each carry an N-linked (GlcNAc...) asparagine glycan. Ig-like C2-type domains are found at residues 245 to 328 (PTEQ…AAIT), 333 to 409 (DLSL…ESLT), and 416 to 501 (PQIK…LNVS). Cystine bridges form between C270/C313, C354/C392, and C435/C485. The helical transmembrane segment at 528 to 549 (LIVGIVVGLLLAALVAGVVYWL) threads the bilayer. Residues 550 to 583 (YMKKSKTASKHVNKDLGNMEENKKLEENNHKTEA) are Cytoplasmic-facing. The segment at 562–583 (NKDLGNMEENKKLEENNHKTEA) is disordered. Over residues 569–583 (EENKKLEENNHKTEA) the composition is skewed to basic and acidic residues.

Homodimer. Interacts (via extracellular domain) with CD6 (via extracellular domain). Homodimerization and interaction with CD6 involve the same region and cannot occur simultaneously. The affinity for CD6 is much higher than the affinity for self-association. Interacts (via glycosylated extracellular domain) with LGALS1 and LGALS3. Interaction with LGALS1 or LGALS3 inhibits interaction with CD6. Glycosylated. Constitutively expressed in the autonomic nervous system. Sympathetic and parasympathetic nerve fibers but not myelinated nerve fibers in the spinal nerve.

The protein resides in the cell membrane. Its subcellular location is the cell projection. It localises to the axon. The protein localises to the dendrite. In terms of biological role, cell adhesion molecule that mediates both heterotypic cell-cell contacts via its interaction with CD6, as well as homotypic cell-cell contacts. Promotes T-cell activation and proliferation via its interactions with CD6. Contributes to the formation and maturation of the immunological synapse via its interactions with CD6. Mediates homotypic interactions with cells that express ALCAM. Mediates attachment of dendritic cells onto endothelial cells via homotypic interaction. Inhibits endothelial cell migration and promotes endothelial tube formation via homotypic interactions. Required for normal organization of the lymph vessel network. Required for normal hematopoietic stem cell engraftment in the bone marrow. Plays a role in hematopoiesis; required for normal numbers of hematopoietic stem cells in bone marrow. Promotes in vitro osteoblast proliferation and differentiation. Promotes neurite extension, axon growth and axon guidance; axons grow preferentially on surfaces that contain ALCAM. Mediates outgrowth and pathfinding for retinal ganglion cell axons. This chain is CD166 antigen (ALCAM), found in Bos taurus (Bovine).